A 303-amino-acid polypeptide reads, in one-letter code: mRNA-capping enzyme subunit beta (303 aa).

It belongs to the fungal TPase family. Heterodimer. The mRNA-capping enzyme is composed of two separate chains alpha and beta, respectively a mRNA guanylyltransferase and an mRNA 5'-triphosphate monophosphatase. Requires Mg(2+) as cofactor.

The protein localises to the nucleus. It carries out the reaction a 5'-end triphospho-ribonucleoside in mRNA + H2O = a 5'-end diphospho-ribonucleoside in mRNA + phosphate + H(+). Its function is as follows. First step of mRNA capping. Converts the 5'-triphosphate end of a nascent mRNA chain into a diphosphate end. In Schizosaccharomyces pombe (strain 972 / ATCC 24843) (Fission yeast), this protein is mRNA-capping enzyme subunit beta (pct1).